Reading from the N-terminus, the 328-residue chain is Eukaryotic translation initiation factor 3 subunit I (328 aa).

WD repeat units lie at residues glycine 8–arginine 49, glycine 50–threonine 89, aspartate 146–glutamine 185, glycine 191–threonine 230, and glycine 288–lysine 327.

It belongs to the eIF-3 subunit I family. Component of the eukaryotic translation initiation factor 3 (eIF-3) complex.

The protein resides in the cytoplasm. Functionally, component of the eukaryotic translation initiation factor 3 (eIF-3) complex, which is involved in protein synthesis of a specialized repertoire of mRNAs and, together with other initiation factors, stimulates binding of mRNA and methionyl-tRNAi to the 40S ribosome. The eIF-3 complex specifically targets and initiates translation of a subset of mRNAs involved in cell proliferation. The sequence is that of Eukaryotic translation initiation factor 3 subunit I (TIF3I1) from Arabidopsis thaliana (Mouse-ear cress).